We begin with the raw amino-acid sequence, 62 residues long: Small ribosomal subunit protein eS17 (62 aa).

The protein belongs to the eukaryotic ribosomal protein eS17 family.

This is Small ribosomal subunit protein eS17 from Methanocaldococcus jannaschii (strain ATCC 43067 / DSM 2661 / JAL-1 / JCM 10045 / NBRC 100440) (Methanococcus jannaschii).